We begin with the raw amino-acid sequence, 177 residues long: ATP synthase subunit delta (177 aa).

Belongs to the ATPase delta chain family. F-type ATPases have 2 components, F(1) - the catalytic core - and F(0) - the membrane proton channel. F(1) has five subunits: alpha(3), beta(3), gamma(1), delta(1), epsilon(1). F(0) has three main subunits: a(1), b(2) and c(10-14). The alpha and beta chains form an alternating ring which encloses part of the gamma chain. F(1) is attached to F(0) by a central stalk formed by the gamma and epsilon chains, while a peripheral stalk is formed by the delta and b chains.

Its subcellular location is the cell membrane. F(1)F(0) ATP synthase produces ATP from ADP in the presence of a proton or sodium gradient. F-type ATPases consist of two structural domains, F(1) containing the extramembraneous catalytic core and F(0) containing the membrane proton channel, linked together by a central stalk and a peripheral stalk. During catalysis, ATP synthesis in the catalytic domain of F(1) is coupled via a rotary mechanism of the central stalk subunits to proton translocation. In terms of biological role, this protein is part of the stalk that links CF(0) to CF(1). It either transmits conformational changes from CF(0) to CF(1) or is implicated in proton conduction. The sequence is that of ATP synthase subunit delta from Streptococcus suis (strain 98HAH33).